A 360-amino-acid polypeptide reads, in one-letter code: Phospho-N-acetylmuramoyl-pentapeptide-transferase (360 aa).

10 consecutive transmembrane segments (helical) span residues 25–45 (RGIL…PWMI), 73–93 (TMGG…WADL), 97–117 (YVWV…VDDY), 134–154 (YFWQ…TAPT), 168–188 (LAIP…VGSS), 199–219 (GLAI…CYLS), 236–256 (AGEL…FLWF), 263–283 (VFMG…IAVI), 288–308 (VVLF…VIQV), and 338–358 (VIVR…ATLK).

Belongs to the glycosyltransferase 4 family. MraY subfamily. Mg(2+) serves as cofactor.

The protein resides in the cell inner membrane. It carries out the reaction UDP-N-acetyl-alpha-D-muramoyl-L-alanyl-gamma-D-glutamyl-meso-2,6-diaminopimeloyl-D-alanyl-D-alanine + di-trans,octa-cis-undecaprenyl phosphate = di-trans,octa-cis-undecaprenyl diphospho-N-acetyl-alpha-D-muramoyl-L-alanyl-D-glutamyl-meso-2,6-diaminopimeloyl-D-alanyl-D-alanine + UMP. It functions in the pathway cell wall biogenesis; peptidoglycan biosynthesis. Its function is as follows. Catalyzes the initial step of the lipid cycle reactions in the biosynthesis of the cell wall peptidoglycan: transfers peptidoglycan precursor phospho-MurNAc-pentapeptide from UDP-MurNAc-pentapeptide onto the lipid carrier undecaprenyl phosphate, yielding undecaprenyl-pyrophosphoryl-MurNAc-pentapeptide, known as lipid I. The protein is Phospho-N-acetylmuramoyl-pentapeptide-transferase of Pseudomonas entomophila (strain L48).